A 936-amino-acid polypeptide reads, in one-letter code: Lon protease homolog, mitochondrial (936 aa).

The transit peptide at 1–40 directs the protein to the mitochondrion; it reads MYATRAIARRLERHAARCKGAHVARAVRGARARTTSAPRA. The tract at residues 65–95 is disordered; sequence AFVSSVDGDGSTGSTGSSSSSSSSAFGDSAS. Residues 66–95 are compositionally biased toward low complexity; sequence FVSSVDGDGSTGSTGSSSSSSSSAFGDSAS. Residues 112–352 enclose the Lon N-terminal domain; it reads VLAVPLPRRP…ATLELLKKEV (241 aa). 507-514 is an ATP binding site; that stretch reads GPPGVGKT. The Lon proteolytic domain maps to 748–932; that stretch reads VTPPGVVTGL…DEVYRQALDW (185 aa). Active-site residues include Ser838 and Lys881.

This sequence belongs to the peptidase S16 family. In terms of assembly, homohexamer or homoheptamer. Organized in a ring with a central cavity.

Its subcellular location is the mitochondrion matrix. The catalysed reaction is Hydrolysis of proteins in presence of ATP.. ATP-dependent serine protease that mediates the selective degradation of misfolded, unassembled or oxidatively damaged polypeptides as well as certain short-lived regulatory proteins in the mitochondrial matrix. May also have a chaperone function in the assembly of inner membrane protein complexes. Participates in the regulation of mitochondrial gene expression and in the maintenance of the integrity of the mitochondrial genome. Binds to mitochondrial DNA in a site-specific manner. The chain is Lon protease homolog, mitochondrial from Ostreococcus lucimarinus (strain CCE9901).